We begin with the raw amino-acid sequence, 61 residues long: Cytotoxin 1 (61 aa).

Disulfide bonds link C3–C22, C15–C39, C43–C54, and C55–C60.

Belongs to the three-finger toxin family. Short-chain subfamily. Type IB cytotoxin sub-subfamily. As to expression, expressed by the venom gland.

The protein resides in the secreted. Its function is as follows. This protein lyses red blood cells and has cardiotoxic and hypotensive activities. This Hemachatus haemachatus (Rinkhals) protein is Cytotoxin 1.